A 157-amino-acid polypeptide reads, in one-letter code: Protein GrpE (157 aa).

Positions 1 to 10 are enriched in basic and acidic residues; that stretch reads MQEENQHPEQ. The disordered stretch occupies residues 1 to 21; that stretch reads MQEENQHPEQDDISEAQDAGA.

The protein belongs to the GrpE family. As to quaternary structure, homodimer.

It is found in the cytoplasm. Functionally, participates actively in the response to hyperosmotic and heat shock by preventing the aggregation of stress-denatured proteins, in association with DnaK and GrpE. It is the nucleotide exchange factor for DnaK and may function as a thermosensor. Unfolded proteins bind initially to DnaJ; upon interaction with the DnaJ-bound protein, DnaK hydrolyzes its bound ATP, resulting in the formation of a stable complex. GrpE releases ADP from DnaK; ATP binding to DnaK triggers the release of the substrate protein, thus completing the reaction cycle. Several rounds of ATP-dependent interactions between DnaJ, DnaK and GrpE are required for fully efficient folding. This chain is Protein GrpE, found in Methylovorus sp. (strain SS1 / DSM 11726).